A 169-amino-acid polypeptide reads, in one-letter code: MPLLDSFTVDHTIMNAPAVRIAKTMQTPSKDTITVFDLRFTVPNEDLLSEKGIHTLEHLYAGFMRNHLNSPDVEIIDISPMGCRTGFYMSLIGSPSETEVANAWLAAMRDVLAVEHQEEIPELNKYQCGTYAMHSLAEAKTIAQAVIDAGVGTNKNADITLSDEQLKQL.

Fe cation contacts are provided by histidine 54, histidine 58, and cysteine 128.

This sequence belongs to the LuxS family. As to quaternary structure, homodimer. Requires Fe cation as cofactor.

The catalysed reaction is S-(5-deoxy-D-ribos-5-yl)-L-homocysteine = (S)-4,5-dihydroxypentane-2,3-dione + L-homocysteine. Involved in the synthesis of autoinducer 2 (AI-2) which is secreted by bacteria and is used to communicate both the cell density and the metabolic potential of the environment. The regulation of gene expression in response to changes in cell density is called quorum sensing. Catalyzes the transformation of S-ribosylhomocysteine (RHC) to homocysteine (HC) and 4,5-dihydroxy-2,3-pentadione (DPD). The protein is S-ribosylhomocysteine lyase of Psychromonas ingrahamii (strain DSM 17664 / CCUG 51855 / 37).